We begin with the raw amino-acid sequence, 187 residues long: Ribosome-recycling factor (187 aa).

The protein belongs to the RRF family.

It is found in the cytoplasm. Its function is as follows. Responsible for the release of ribosomes from messenger RNA at the termination of protein biosynthesis. May increase the efficiency of translation by recycling ribosomes from one round of translation to another. The protein is Ribosome-recycling factor of Parabacteroides distasonis (strain ATCC 8503 / DSM 20701 / CIP 104284 / JCM 5825 / NCTC 11152).